Consider the following 120-residue polypeptide: uncharacterized protein (120 aa).

The chain crosses the membrane as a helical span at residues leucine 93–leucine 109.

It localises to the membrane. This is an uncharacterized protein from Saccharomyces cerevisiae (strain ATCC 204508 / S288c) (Baker's yeast).